The chain runs to 366 residues: Ribosomal RNA large subunit methyltransferase M (366 aa).

S-adenosyl-L-methionine contacts are provided by residues Ser-188, 221–224 (CPGG), Asp-240, Asp-260, and Asp-277. The active-site Proton acceptor is Lys-306.

It belongs to the class I-like SAM-binding methyltransferase superfamily. RNA methyltransferase RlmE family. RlmM subfamily. As to quaternary structure, monomer.

The protein localises to the cytoplasm. The catalysed reaction is cytidine(2498) in 23S rRNA + S-adenosyl-L-methionine = 2'-O-methylcytidine(2498) in 23S rRNA + S-adenosyl-L-homocysteine + H(+). Catalyzes the 2'-O-methylation at nucleotide C2498 in 23S rRNA. The sequence is that of Ribosomal RNA large subunit methyltransferase M from Musicola paradisiaca (strain Ech703) (Dickeya paradisiaca).